Consider the following 233-residue polypeptide: Ribonuclease 3 (233 aa).

One can recognise an RNase III domain in the interval 8–135; it reads AQRFLEDKQL…VIGAIYLDQG (128 aa). Residue glutamate 48 participates in Mg(2+) binding. Aspartate 52 is an active-site residue. 2 residues coordinate Mg(2+): aspartate 121 and glutamate 124. Residue glutamate 124 is part of the active site. A DRBM domain is found at 161–230; it reads DYKSKLQELV…AQKVLQDNLV (70 aa).

Belongs to the ribonuclease III family. Homodimer. Mg(2+) serves as cofactor.

The protein localises to the cytoplasm. The enzyme catalyses Endonucleolytic cleavage to 5'-phosphomonoester.. Its function is as follows. Digests double-stranded RNA. Involved in the processing of primary rRNA transcript to yield the immediate precursors to the large and small rRNAs (23S and 16S). Processes some mRNAs, and tRNAs when they are encoded in the rRNA operon. Processes pre-crRNA and tracrRNA of type II CRISPR loci if present in the organism. The sequence is that of Ribonuclease 3 from Syntrophomonas wolfei subsp. wolfei (strain DSM 2245B / Goettingen).